Consider the following 577-residue polypeptide: Endopolyphosphatase (577 aa).

At 1–2 the chain is on the cytoplasmic side; the sequence is MR. The helical; Signal-anchor for type II membrane protein transmembrane segment at 3–23 threads the bilayer; it reads PSVITVAVLFVQSTWASFAFG. Residues 24 to 577 lie on the Vacuolar side of the membrane; it reads NPMSMRNKAH…YIGSISDFED (554 aa). N-linked (GlcNAc...) asparagine glycosylation is found at Asn363, Asn370, Asn375, and Asn399. The segment at 430-460 is disordered; that stretch reads SDYEIDKKKKKKKKNNKKKKKNKRKNIKPGP. Positions 437 to 456 are enriched in basic residues; the sequence is KKKKKKKNNKKKKKNKRKNI. N-linked (GlcNAc...) asparagine glycosylation occurs at Asn481.

Belongs to the endopolyphosphatase PPN1 family. A divalent metal cation serves as cofactor. Processing by proteases in the vacuole may be required for activation.

It is found in the vacuole membrane. It catalyses the reaction [phosphate](n+1) + n H2O = (n+1) phosphate + n H(+). In terms of biological role, catalyzes the hydrolysis of inorganic polyphosphate (polyP) chains of many hundreds of phosphate residues into shorter lengths. This Schizosaccharomyces pombe (strain 972 / ATCC 24843) (Fission yeast) protein is Endopolyphosphatase (ppn1).